The primary structure comprises 1703 residues: Pecanex-like protein 1 (1703 aa).

The next 2 membrane-spanning stretches (helical) occupy residues 31-53 (VNALHLYIWLFLLCFPFTLYMAL) and 57-74 (MVIVGIYCGVIAAMFLLL). Residues 91-100 (VEHQTRESKG) are compositionally biased toward basic and acidic residues. The segment at 91–126 (VEHQTRESKGSRGGTGGANDPVTRREDSNGLGDPGG) is disordered. The N-linked (GlcNAc...) asparagine glycan is linked to N256. The next 3 helical transmembrane spans lie at 416–438 (VLAVVLAVLVAFLGSVLLIHGFF), 477–499 (AYSRPVYFCLCCGLIWLLHYGSL), and 525–547 (LVIVFTLCFPIIFFVGLLPQVNT). A glycan (N-linked (GlcNAc...) asparagine) is linked at N564. 4 helical membrane passes run 569–591 (LLSALYSILRSIVTVALLYCFCY), 603–622 (IPVLFSVFCGLLVAVSYHLS), 675–697 (LIVCVVIAVLYFAIHVSTVFIAL), and 704–721 (VLYGLLGAVGLLTHYLLP). N-linked (GlcNAc...) asparagine glycans are attached at residues N988, N1129, and N1391. 2 disordered regions span residues 1475–1556 (VQSG…HSIP) and 1577–1598 (TDPLSQHHHPHHHPQQHNPTHA). 2 stretches are compositionally biased toward low complexity: residues 1485–1510 (ARASVVSQSSSYRYSSSRHSSLRTST) and 1518–1556 (RSSTSQLSLRTLPTSLQLRLGSTSDPAGPSSSLSSHSIP). Residues 1582–1591 (QHHHPHHHPQ) are compositionally biased toward basic residues. N1622 carries an N-linked (GlcNAc...) asparagine glycan.

It belongs to the pecanex family.

It is found in the membrane. This Takifugu rubripes (Japanese pufferfish) protein is Pecanex-like protein 1.